The following is a 382-amino-acid chain: Serine protease 43 (382 aa).

The signal sequence occupies residues 1-27; it reads MGGFCGADRGGFLALLVWLQLLQPLFS. Positions 30–97 are disordered; sequence YKPREDSGVM…SGTTTKITLE (68 aa). Composition is skewed to polar residues over residues 56-68 and 85-95; these read AQQS…SISH and GSPSGTTTKIT. The Peptidase S1 domain maps to 119-355; the sequence is VDPGSLSAGR…YNEWVSYVLS (237 aa). A disulfide bridge connects residues C144 and C160. Residues H159 and D205 each act as charge relay system in the active site. Disulfide bonds link C239-C313, C272-C293, and C303-C331. The Charge relay system role is filled by S307. The chain crosses the membrane as a helical span at residues 362 to 382; it reads PMGVLVLYLSLVFPLALLVAL.

Belongs to the peptidase S1 family. As to expression, testis-specific. Expressed in germ cells at the stages from late pachytene spermatocytes to spermatids.

It is found in the cell membrane. Plays a role in spermatogenesis. Involved in germ cell survival during meiosis. Lacks protease activity in vitro. The chain is Serine protease 43 from Mus musculus (Mouse).